Consider the following 138-residue polypeptide: Large ribosomal subunit protein uL16 (138 aa).

Residues 1 to 17 are compositionally biased toward basic residues; it reads MLIPRKVKHRKQHHPRQ. The tract at residues 1 to 24 is disordered; the sequence is MLIPRKVKHRKQHHPRQRGIASGG.

It belongs to the universal ribosomal protein uL16 family. In terms of assembly, part of the 50S ribosomal subunit.

Binds 23S rRNA and is also seen to make contacts with the A and possibly P site tRNAs. This chain is Large ribosomal subunit protein uL16, found in Mycobacterium ulcerans (strain Agy99).